A 67-amino-acid polypeptide reads, in one-letter code: Large ribosomal subunit protein eL24 (67 aa).

Zn(2+) contacts are provided by Cys7, Cys10, Cys33, and Cys37. A C4-type zinc finger spans residues 7–37; it reads CSYCGKEFEPGTGKMYVRNDGRVYFFCSRKC.

Belongs to the eukaryotic ribosomal protein eL24 family. As to quaternary structure, part of the 50S ribosomal subunit. Forms a cluster with proteins L3 and L14. Zn(2+) is required as a cofactor.

Functionally, binds to the 23S rRNA. This chain is Large ribosomal subunit protein eL24, found in Thermococcus sibiricus (strain DSM 12597 / MM 739).